A 126-amino-acid chain; its full sequence is UPF0102 protein BCAN_A0183 (126 aa).

Belongs to the UPF0102 family.

The protein is UPF0102 protein BCAN_A0183 of Brucella canis (strain ATCC 23365 / NCTC 10854 / RM-666).